The following is a 222-amino-acid chain: MARSPVLIINCKNYKEAAGGRIDSLAAAAAGAAAKYGVRIALAPPQHLLGAVKGEDLTVLAQHIDDKGVGSTTGYVVPELLGESGVSGALINHSEHRVSADQVASLVPRLRGLDMISVVCVKDSAEAANLSRHRPDYIAIEPPELIGSGRSVSSERPELIGEAAEAIRGADGTKLLCGAGITSGADVRKALELGSKGILVASGVVKSSDPAAAIAELAQAMS.

10–12 (NCK) provides a ligand contact to substrate. H93 serves as the catalytic Electrophile. The Proton acceptor role is filled by E141. Residues I146, G180, and 201–202 (AS) each bind substrate.

It belongs to the triosephosphate isomerase family. As to quaternary structure, homotetramer; dimer of dimers.

The protein resides in the cytoplasm. The catalysed reaction is D-glyceraldehyde 3-phosphate = dihydroxyacetone phosphate. It functions in the pathway carbohydrate biosynthesis; gluconeogenesis. Its pathway is carbohydrate degradation; glycolysis; D-glyceraldehyde 3-phosphate from glycerone phosphate: step 1/1. Involved in the gluconeogenesis. Catalyzes stereospecifically the conversion of dihydroxyacetone phosphate (DHAP) to D-glyceraldehyde-3-phosphate (G3P). The chain is Triosephosphate isomerase from Cenarchaeum symbiosum (strain A).